The primary structure comprises 1316 residues: DNA-directed RNA polymerase subunit beta' (1316 aa).

4 residues coordinate Zn(2+): C60, C62, C75, and C78. Positions 535, 537, and 539 each coordinate Mg(2+). The Zn(2+) site is built by C891, C968, C975, and C978.

This sequence belongs to the RNA polymerase beta' chain family. The RNAP catalytic core consists of 2 alpha, 1 beta, 1 beta' and 1 omega subunit. When a sigma factor is associated with the core the holoenzyme is formed, which can initiate transcription. Requires Mg(2+) as cofactor. It depends on Zn(2+) as a cofactor.

The enzyme catalyses RNA(n) + a ribonucleoside 5'-triphosphate = RNA(n+1) + diphosphate. Its function is as follows. DNA-dependent RNA polymerase catalyzes the transcription of DNA into RNA using the four ribonucleoside triphosphates as substrates. In Mycobacterium leprae (strain Br4923), this protein is DNA-directed RNA polymerase subunit beta'.